The sequence spans 92 residues: Cell division protein FtsB (92 aa).

Residues methionine 1–phenylalanine 3 lie on the Cytoplasmic side of the membrane. The chain crosses the membrane as a helical span at residues phenylalanine 4 to phenylalanine 21. The Periplasmic segment spans residues glycine 22–glutamine 92. Positions leucine 40 to asparagine 73 form a coiled coil.

It belongs to the FtsB family. As to quaternary structure, part of a complex composed of FtsB, FtsL and FtsQ.

Its subcellular location is the cell inner membrane. Its function is as follows. Essential cell division protein. May link together the upstream cell division proteins, which are predominantly cytoplasmic, with the downstream cell division proteins, which are predominantly periplasmic. In Pseudoalteromonas translucida (strain TAC 125), this protein is Cell division protein FtsB.